Reading from the N-terminus, the 282-residue chain is sn-glycerol-3-phosphate transport system permease protein UgpE (282 aa).

Transmembrane regions (helical) follow at residues 14 to 34 (LILILGIIIVAFPIYYTFVAS), 86 to 106 (MAIAVGKIIISFMSAFAIVFF), 112 to 132 (MFFFWMIFITLMLPVEVRILP), 146 to 168 (YAGLTLPLMASATATFLFRQFFL), 201 to 221 (IAALFVILFIYGWTQYLWPLL), and 248 to 268 (WNYVMVTAILAIIPLILVVVL). The region spanning 78-269 (LWNSFVVAMA…IPLILVVVLM (192 aa)) is the ABC transmembrane type-1 domain.

Belongs to the binding-protein-dependent transport system permease family. The complex is composed of two ATP-binding proteins (UgpC), two transmembrane proteins (UgpA and UgpE) and a solute-binding protein (UgpB).

It is found in the cell inner membrane. Part of the ABC transporter complex UgpBAEC involved in sn-glycerol-3-phosphate (G3P) import. Probably responsible for the translocation of the substrate across the membrane. This is sn-glycerol-3-phosphate transport system permease protein UgpE (ugpE) from Brucella abortus (strain 2308).